Reading from the N-terminus, the 377-residue chain is MNVPEPTLDDLPLRDNLRGKSPYGAMQLLVPVLLNTNENPHPPTKALVDDVVRSVQKVAVDLHRYPDRDAVALRQDLASYLTAQTGIRLGVENIWAANGSNEILQQLLQAFGGPGRSAIGFVPSYSMHPIIADGTHTEWLETVRADDFSLDVEAAVTAVADRKPDVVFIASPNNPSGQSISLADLRRLLDVVPGILIVDEAYGEFSSRPSAVALVGEYPTKIVVTRTTSKAFAFAGGRLGYLIATPALVEAMLLVRLPYHLSSVTQAAARAALRHADDTLGSVAALIAERERVTKSLVHMGFRVIPSDANFVLFGHFSDAAGAWQHYLDTGVLIRDVGIPGYLRATTGLAEENDAFLKASSEIAATELAPATTLGAS.

Lysine 230 is subject to N6-(pyridoxal phosphate)lysine.

The protein belongs to the class-II pyridoxal-phosphate-dependent aminotransferase family. Histidinol-phosphate aminotransferase subfamily. As to quaternary structure, homodimer. Requires pyridoxal 5'-phosphate as cofactor.

It catalyses the reaction L-histidinol phosphate + 2-oxoglutarate = 3-(imidazol-4-yl)-2-oxopropyl phosphate + L-glutamate. It functions in the pathway amino-acid biosynthesis; L-histidine biosynthesis; L-histidine from 5-phospho-alpha-D-ribose 1-diphosphate: step 7/9. This is Histidinol-phosphate aminotransferase from Mycobacterium leprae (strain Br4923).